We begin with the raw amino-acid sequence, 856 residues long: Nuclear valosin-containing protein-like (856 aa).

The tract at residues 1–220 (MKPRPAGFVD…SLLESDMKRK (220 aa)) is interaction with RPL5. Residues 49–52 (RRKR) carry the Nucleolar localization signal motif. At Lys-70 the chain carries N6-acetyllysine. The disordered stretch occupies residues 84–175 (AKRARQGEED…AKDSEGGWFI (92 aa)). A Nuclear localization signal motif is present at residues 85–88 (KRAR). Acidic residues predominate over residues 92–111 (EDNEYTESYSDDDSSMEDYP). Polar residues-rich tracts occupy residues 114–124 (QSANHMNSSLL) and 133–158 (DSVSNTPEMEQRETTSSTPRISSKTG). Ser-134 carries the post-translational modification Phosphoserine. The residue at position 138 (Thr-138) is a Phosphothreonine. Lys-156 is subject to N6-acetyllysine. Ser-191 carries the post-translational modification Phosphoserine. Positions 197–236 (PKKPITEIQDSKDSSLLESDMKRKGKLKNKGSKRKKEDLQ) are disordered. Residues 205-218 (QDSKDSSLLESDMK) show a composition bias toward basic and acidic residues. Lys-208 is covalently cross-linked (Glycyl lysine isopeptide (Lys-Gly) (interchain with G-Cter in SUMO2)). A phosphoserine mark is found at Ser-211 and Ser-215. The short motif at 218-232 (KRKGKLKNKGSKRKK) is the Nuclear localization signal element. Basic residues predominate over residues 219–230 (RKGKLKNKGSKR). Residues 267 to 474 (VGGNDMTLKE…LTPGFVGADL (208 aa)) form an interaction with WDR74 region. 305–312 (GPPGCGKT) provides a ligand contact to ATP. A disordered region spans residues 496 to 523 (QQKKNPEMEDLPSKGVQEERLGTEPTSE). 622–629 (GPPGCGKT) is a binding site for ATP.

The protein belongs to the AAA ATPase family. As to quaternary structure, interacts with NCL/nucleolin. Isoform 1 and isoform 2 interact with TERT and isoform 1 exhibits a higher binding affinity for TERT compared to isoform 2. Isoform 1 interacts with MTREX in an ATP-dependent manner; the interaction is required to associate NVL with nuclear RNA exosome. Isoform 1 interacts with RPL5 in an ATP-dependent manner. Interacts with WDR74 (through WDR repeats); the interaction is independent of RNA or pre-60S ribosome particles. As to expression, widely expressed. Highest level of expression in heart, placenta, skeletal muscle, pancreas and retina.

The protein localises to the nucleus. Its subcellular location is the nucleoplasm. It is found in the nucleolus. Participates in the assembly of the telomerase holoenzyme and effecting of telomerase activity via its interaction with TERT. Involved in both early and late stages of the pre-rRNA processing pathways. Spatiotemporally regulates 60S ribosomal subunit biogenesis in the nucleolus. Catalyzes the release of specific assembly factors, such as WDR74, from pre-60S ribosomal particles through the ATPase activity. The chain is Nuclear valosin-containing protein-like from Homo sapiens (Human).